An 83-amino-acid polypeptide reads, in one-letter code: Small ribosomal subunit protein eS21 (83 aa).

Belongs to the eukaryotic ribosomal protein eS21 family. Component of the 40S small ribosomal subunit.

The protein localises to the cytoplasm. The protein resides in the cytosol. It localises to the rough endoplasmic reticulum. Its function is as follows. Component of the small ribosomal subunit. The ribosome is a large ribonucleoprotein complex responsible for the synthesis of proteins in the cell. The protein is Small ribosomal subunit protein eS21 (rps21) of Xenopus tropicalis (Western clawed frog).